Consider the following 389-residue polypeptide: S-adenosylmethionine synthase (389 aa).

ATP is bound at residue His16. Asp18 is a binding site for Mg(2+). Glu44 serves as a coordination point for K(+). Residues Glu57 and Gln101 each contribute to the L-methionine site. The segment at 101–111 is flexible loop; sequence QSVDIAQGVNE. ATP contacts are provided by residues 168 to 170, 234 to 235, Asp243, 249 to 250, Ala266, and Lys270; these read DAK, RF, and RK. Asp243 is an L-methionine binding site. L-methionine is bound at residue Lys274.

This sequence belongs to the AdoMet synthase family. Homotetramer; dimer of dimers. It depends on Mg(2+) as a cofactor. Requires K(+) as cofactor.

It localises to the cytoplasm. It carries out the reaction L-methionine + ATP + H2O = S-adenosyl-L-methionine + phosphate + diphosphate. The protein operates within amino-acid biosynthesis; S-adenosyl-L-methionine biosynthesis; S-adenosyl-L-methionine from L-methionine: step 1/1. Its function is as follows. Catalyzes the formation of S-adenosylmethionine (AdoMet) from methionine and ATP. The overall synthetic reaction is composed of two sequential steps, AdoMet formation and the subsequent tripolyphosphate hydrolysis which occurs prior to release of AdoMet from the enzyme. The chain is S-adenosylmethionine synthase from Magnetococcus marinus (strain ATCC BAA-1437 / JCM 17883 / MC-1).